Reading from the N-terminus, the 284-residue chain is Bifunctional protein FolD (284 aa).

NADP(+) is bound by residues 166-168, serine 191, and isoleucine 232; that span reads GAS.

Belongs to the tetrahydrofolate dehydrogenase/cyclohydrolase family. As to quaternary structure, homodimer.

The enzyme catalyses (6R)-5,10-methylene-5,6,7,8-tetrahydrofolate + NADP(+) = (6R)-5,10-methenyltetrahydrofolate + NADPH. It catalyses the reaction (6R)-5,10-methenyltetrahydrofolate + H2O = (6R)-10-formyltetrahydrofolate + H(+). Its pathway is one-carbon metabolism; tetrahydrofolate interconversion. Functionally, catalyzes the oxidation of 5,10-methylenetetrahydrofolate to 5,10-methenyltetrahydrofolate and then the hydrolysis of 5,10-methenyltetrahydrofolate to 10-formyltetrahydrofolate. This is Bifunctional protein FolD from Neisseria meningitidis serogroup C (strain 053442).